The sequence spans 562 residues: NAD-dependent malic enzyme (562 aa).

The active-site Proton donor is the Y101. Position 154 (R154) interacts with NAD(+). K172 acts as the Proton acceptor in catalysis. E243, D244, and D267 together coordinate a divalent metal cation. NAD(+) contacts are provided by D267 and N415.

Belongs to the malic enzymes family. Homotetramer. Mg(2+) is required as a cofactor. Requires Mn(2+) as cofactor.

The catalysed reaction is (S)-malate + NAD(+) = pyruvate + CO2 + NADH. It catalyses the reaction oxaloacetate + H(+) = pyruvate + CO2. This Shewanella loihica (strain ATCC BAA-1088 / PV-4) protein is NAD-dependent malic enzyme.